A 953-amino-acid chain; its full sequence is Translation initiation factor IF-2 (953 aa).

Disordered stretches follow at residues 52-241 (KASK…QQEA) and 279-363 (TKLK…TERK). Composition is skewed to basic and acidic residues over residues 80 to 89 (TGSEHVEKTQ), 98 to 111 (FKAE…EQAA), and 140 to 188 (QGDK…ENHK). The segment covering 191–207 (RFTNQKKQGRQEPQSKS) has biased composition (polar residues). The segment covering 229–241 (RQSETRFRAQQEA) has biased composition (basic and acidic residues). A compositionally biased stretch (polar residues) spans 282-291 (KSSNISAKST). Over residues 300–317 (ARPEKNRELTHHSQEGQK) the composition is skewed to basic and acidic residues. Positions 322-338 (SWNSQNQVRNQKNSNWN) are enriched in low complexity. The span at 339 to 348 (KNKKTKKGKN) shows a compositional bias: basic residues. Residues 454–623 (ERAPVVTIMG…LLVAEVEELK (170 aa)) enclose the tr-type G domain. The segment at 463–470 (GHVDHGKT) is G1. 463–470 (GHVDHGKT) serves as a coordination point for GTP. Residues 488–492 (GITQH) are G2. Residues 509–512 (DTPG) are G3. Residues 509–513 (DTPGH) and 563–566 (NKID) each bind GTP. The interval 563-566 (NKID) is G4. A G5 region spans residues 599–601 (SAK).

The protein belongs to the TRAFAC class translation factor GTPase superfamily. Classic translation factor GTPase family. IF-2 subfamily.

The protein resides in the cytoplasm. One of the essential components for the initiation of protein synthesis. Protects formylmethionyl-tRNA from spontaneous hydrolysis and promotes its binding to the 30S ribosomal subunits. Also involved in the hydrolysis of GTP during the formation of the 70S ribosomal complex. The protein is Translation initiation factor IF-2 of Streptococcus pyogenes serotype M4 (strain MGAS10750).